A 2313-amino-acid polypeptide reads, in one-letter code: Protein Ycf2 (2313 aa).

1606–1613 lines the ATP pocket; that stretch reads GSMETGRS.

This sequence belongs to the Ycf2 family.

Its subcellular location is the plastid. It localises to the chloroplast stroma. Functionally, probable ATPase of unknown function. Its presence in a non-photosynthetic plant (Epifagus virginiana) and experiments in tobacco indicate that it has an essential function which is probably not related to photosynthesis. The chain is Protein Ycf2 from Psilotum nudum (Whisk fern).